The sequence spans 250 residues: UDP-2,3-diacylglucosamine hydrolase (250 aa).

Mn(2+)-binding residues include Asp-8, His-10, Asp-41, Asn-79, and His-115. Position 79–80 (79–80) interacts with substrate; sequence NH. Substrate-binding residues include Asp-123, Thr-165, Lys-168, and His-196. 2 residues coordinate Mn(2+): His-196 and His-198.

Belongs to the LpxH family. Requires Mn(2+) as cofactor.

Its subcellular location is the cell inner membrane. The enzyme catalyses UDP-2-N,3-O-bis[(3R)-3-hydroxytetradecanoyl]-alpha-D-glucosamine + H2O = 2-N,3-O-bis[(3R)-3-hydroxytetradecanoyl]-alpha-D-glucosaminyl 1-phosphate + UMP + 2 H(+). The protein operates within glycolipid biosynthesis; lipid IV(A) biosynthesis; lipid IV(A) from (3R)-3-hydroxytetradecanoyl-[acyl-carrier-protein] and UDP-N-acetyl-alpha-D-glucosamine: step 4/6. In terms of biological role, hydrolyzes the pyrophosphate bond of UDP-2,3-diacylglucosamine to yield 2,3-diacylglucosamine 1-phosphate (lipid X) and UMP by catalyzing the attack of water at the alpha-P atom. Involved in the biosynthesis of lipid A, a phosphorylated glycolipid that anchors the lipopolysaccharide to the outer membrane of the cell. The chain is UDP-2,3-diacylglucosamine hydrolase from Blochmanniella pennsylvanica (strain BPEN).